A 181-amino-acid polypeptide reads, in one-letter code: Large ribosomal subunit protein uL5 (181 aa).

This sequence belongs to the universal ribosomal protein uL5 family. As to quaternary structure, part of the 50S ribosomal subunit; contacts the 5S rRNA and probably tRNA. Forms a bridge to the 30S subunit in the 70S ribosome.

Its function is as follows. This is one of the proteins that bind and probably mediate the attachment of the 5S RNA into the large ribosomal subunit, where it forms part of the central protuberance. In the 70S ribosome it contacts protein S13 of the 30S subunit (bridge B1b), connecting the 2 subunits; this bridge is implicated in subunit movement. May contact the P site tRNA; the 5S rRNA and some of its associated proteins might help stabilize positioning of ribosome-bound tRNAs. The protein is Large ribosomal subunit protein uL5 of Methanococcus maripaludis (strain C7 / ATCC BAA-1331).